The following is a 245-amino-acid chain: 6-carboxyhexanoate--CoA ligase (245 aa).

It belongs to the BioW family. Homodimer. It depends on Mg(2+) as a cofactor.

It catalyses the reaction heptanedioate + ATP + CoA = 6-carboxyhexanoyl-CoA + AMP + diphosphate. It functions in the pathway metabolic intermediate metabolism; pimeloyl-CoA biosynthesis; pimeloyl-CoA from pimelate: step 1/1. Its function is as follows. Catalyzes the transformation of pimelate into pimeloyl-CoA with concomitant hydrolysis of ATP to AMP. The chain is 6-carboxyhexanoate--CoA ligase from Sulfurihydrogenibium azorense (strain DSM 15241 / OCM 825 / Az-Fu1).